The sequence spans 807 residues: F-box protein YLR352W (807 aa).

In terms of domain architecture, F-box spans L220–L266. Positions D607 to Q616 are enriched in basic and acidic residues. 2 disordered regions span residues D607–A647 and H716–S739. Polar residues-rich tracts occupy residues S627–N644 and S723–E736.

As to quaternary structure, interacts with SKP1 and CDC53. Component of the probable SCF(YBR352W) complex containing CDC53, SKP1, RBX1 and YBR352W.

It participates in protein modification; protein ubiquitination. Substrate recognition component of a SCF (SKP1-CUL1-F-box protein) E3 ubiquitin-protein ligase complex which mediates the ubiquitination and subsequent proteasomal degradation of target proteins. Probably recognizes and binds to phosphorylated target proteins. This Saccharomyces cerevisiae (strain ATCC 204508 / S288c) (Baker's yeast) protein is F-box protein YLR352W.